A 138-amino-acid chain; its full sequence is Integration host factor subunit beta (138 aa).

Positions 81 to 98 (KAGKELRERVDRSLERQG) are enriched in basic and acidic residues. Positions 81 to 138 (KAGKELRERVDRSLERQGDSSSEGEPVSLTAVKAARQAGGHHAAGFPAEATPTLVMSR) are disordered.

It belongs to the bacterial histone-like protein family. Heterodimer of an alpha and a beta chain.

Functionally, this protein is one of the two subunits of integration host factor, a specific DNA-binding protein that functions in genetic recombination as well as in transcriptional and translational control. The chain is Integration host factor subunit beta from Ralstonia nicotianae (strain ATCC BAA-1114 / GMI1000) (Ralstonia solanacearum).